The primary structure comprises 281 residues: Ribosomal RNA small subunit methyltransferase I (281 aa).

Belongs to the methyltransferase superfamily. RsmI family.

The protein localises to the cytoplasm. It carries out the reaction cytidine(1402) in 16S rRNA + S-adenosyl-L-methionine = 2'-O-methylcytidine(1402) in 16S rRNA + S-adenosyl-L-homocysteine + H(+). Functionally, catalyzes the 2'-O-methylation of the ribose of cytidine 1402 (C1402) in 16S rRNA. The protein is Ribosomal RNA small subunit methyltransferase I of Erythrobacter litoralis (strain HTCC2594).